We begin with the raw amino-acid sequence, 494 residues long: Chromosomal replication initiator protein DnaA (494 aa).

Residues 1–103 (MTNIGGPVVE…LRVEVIVRGM (103 aa)) form a domain I, interacts with DnaA modulators region. The segment at 103–148 (MKRVSKGVVCRTSAAPVVLEGQTASSFVESYTEPSVKDIEAGVFGS) is domain II. The domain III, AAA+ region stretch occupies residues 149 to 371 (PLDSRYTFES…GAFNQLLFRQ (223 aa)). Residues G195, G197, K198, and T199 each contribute to the ATP site. Residues 372 to 494 (SFESDLSLER…LKRLIGEQAA (123 aa)) form a domain IV, binds dsDNA region.

It belongs to the DnaA family. In terms of assembly, oligomerizes as a right-handed, spiral filament on DNA at oriC.

Its subcellular location is the cytoplasm. Plays an essential role in the initiation and regulation of chromosomal replication. ATP-DnaA binds to the origin of replication (oriC) to initiate formation of the DNA replication initiation complex once per cell cycle. Binds the DnaA box (a 9 base pair repeat at the origin) and separates the double-stranded (ds)DNA. Forms a right-handed helical filament on oriC DNA; dsDNA binds to the exterior of the filament while single-stranded (ss)DNA is stabiized in the filament's interior. The ATP-DnaA-oriC complex binds and stabilizes one strand of the AT-rich DNA unwinding element (DUE), permitting loading of DNA polymerase. After initiation quickly degrades to an ADP-DnaA complex that is not apt for DNA replication. Binds acidic phospholipids. The polypeptide is Chromosomal replication initiator protein DnaA (Bartonella quintana (strain Toulouse) (Rochalimaea quintana)).